Consider the following 352-residue polypeptide: MKKIVFTGGGSAGHVTPNLAIIPYLKEDNWDISYIGSHQGIEKTIIEKEDIPYYSIASGKLRRYFDLKNIKDPFLVMKGVMDAYVRIRKLKPDVIFSKGGFVSVPVVIGGWLNRVPVLLHESDMTPGLANKIALRFASKIFVTFEEAAKHLPKEKVIYTGSPVREEVLKGDREKALAFLGFSRKKPVITIMGGSLGAKKINETVREALPELLRKYQIVHLCGKGNLDDSLQNKEGYRQFEYVHGELPDILAITDFVISRAGSNAIFEFLTLQKPMLLIPLSKFASRGDQILNAESFERQGYASVLYEEDVTVNSLIKHVEELSHNNEAYKTALKKYNGKEAIQTIIHHISEA.

Residues 11-13 (SAG), R164, S194, and Q289 contribute to the UDP-N-acetyl-alpha-D-glucosamine site.

It belongs to the glycosyltransferase 28 family. MurG subfamily.

The protein localises to the cell membrane. It catalyses the reaction di-trans,octa-cis-undecaprenyl diphospho-N-acetyl-alpha-D-muramoyl-L-alanyl-D-glutamyl-meso-2,6-diaminopimeloyl-D-alanyl-D-alanine + UDP-N-acetyl-alpha-D-glucosamine = di-trans,octa-cis-undecaprenyl diphospho-[N-acetyl-alpha-D-glucosaminyl-(1-&gt;4)]-N-acetyl-alpha-D-muramoyl-L-alanyl-D-glutamyl-meso-2,6-diaminopimeloyl-D-alanyl-D-alanine + UDP + H(+). Its pathway is cell wall biogenesis; peptidoglycan biosynthesis. Cell wall formation. Catalyzes the transfer of a GlcNAc subunit on undecaprenyl-pyrophosphoryl-MurNAc-pentapeptide (lipid intermediate I) to form undecaprenyl-pyrophosphoryl-MurNAc-(pentapeptide)GlcNAc (lipid intermediate II). The protein is UDP-N-acetylglucosamine--N-acetylmuramyl-(pentapeptide) pyrophosphoryl-undecaprenol N-acetylglucosamine transferase 2 of Bacillus anthracis.